An 805-amino-acid chain; its full sequence is Phenylalanine--tRNA ligase beta subunit (805 aa).

One can recognise a tRNA-binding domain in the interval 39-154; sequence SEGLKKVVVG…DDATPGDPVF (116 aa). The B5 domain maps to 410–485; it reads VQPTTVTIDL…RLYGYDNLPA (76 aa). 4 residues coordinate Mg(2+): Asp463, Asp469, Glu472, and Glu473. The region spanning 712-805 is the FDX-ACB domain; that stretch reads SKFPSITRDV…LTDELGAEIR (94 aa).

It belongs to the phenylalanyl-tRNA synthetase beta subunit family. Type 1 subfamily. As to quaternary structure, tetramer of two alpha and two beta subunits. Mg(2+) is required as a cofactor.

It is found in the cytoplasm. The enzyme catalyses tRNA(Phe) + L-phenylalanine + ATP = L-phenylalanyl-tRNA(Phe) + AMP + diphosphate + H(+). The protein is Phenylalanine--tRNA ligase beta subunit of Lactiplantibacillus plantarum (strain ATCC BAA-793 / NCIMB 8826 / WCFS1) (Lactobacillus plantarum).